Consider the following 414-residue polypeptide: Membrane protein UL43 (414 aa).

6 helical membrane passes run 39 to 59 (GFAH…VVLS), 61 to 81 (GPYA…LGFL), 96 to 116 (AWLR…GEAG), 121 to 141 (VPGP…LLVL), 148 to 168 (LFLL…VGGL), and 184 to 204 (AAAL…GDSF). Positions 225–253 (PRYAPEDAERPTDHGPLLPSTHHQRSPRV) are disordered. Positions 228 to 237 (APEDAERPTD) are enriched in basic and acidic residues. A run of 2 helical transmembrane segments spans residues 339–359 (GLMF…AVWI) and 383–403 (ATLR…GVLV).

Belongs to the alphaherpesvirinae HHV-1 UL43 family.

The protein localises to the membrane. This is Membrane protein UL43 from Homo sapiens (Human).